Reading from the N-terminus, the 491-residue chain is FAD-dependent monooxygenase idtM (491 aa).

FAD-binding residues include Glu34, Gly48, Arg107, Asp307, and Ala320. Residues Ile448–Val468 traverse the membrane as a helical segment.

Belongs to the paxM FAD-dependent monooxygenase family. Requires FAD as cofactor.

The protein localises to the membrane. It functions in the pathway secondary metabolite biosynthesis. FAD-dependent monooxygenase; part of the gene cluster that mediates the biosynthesis of paspalitrems, indole-diterpene (IDT) mycotoxins that are potent tremorgens in mammals. The geranylgeranyl diphosphate (GGPP) synthase idtG is proposed to catalyze the first step in IDT biosynthesis via catalysis of a series of iterative condensations of isopentenyl diphosphate (IPP) with dimethylallyl diphosphate (DMAPP), geranyl diphosphate (GPP), and farnesyl diphosphate (FPP), to form GGPP. Condensation of indole-3-glycerol phosphate with GGPP by the prenyltransferase idtC then forms 3-geranylgeranylindole (3-GGI). Epoxidation of the two terminal alkenes of the geranylgeranyl moiety by the FAD-dependent monooxygenase idtM, and cyclization by the terpene cyclase idtB then leads to the production of paspaline. The cytochrome P450 monooxygenase idtP then catalyzes oxidative elimination of the pendant methyl group at C-12 of paspaline and generates the C-10 ketone to yield 13-desoxypaxilline. The cytochrome P450 monooxygenase idtQ may catalyze the C-13 oxidation of 13-desoxypaxilline to afford paxilline. Considering that both paspalicine and paxilline were detected in C.paspali, idtQ also catalyzes the formation of paspalinine from 13-desoxypaxilline via paspalicine as an intermediate. Finally, the alpha-prenyltransferase idtF prenylates paspalinine at the C-20 or the C-21 positions to yield paspalitrems A and C, respectively. The hydroxylation of paspalitrem A at C-32 by a still unknown oxidase affords paspalitrem B. This chain is FAD-dependent monooxygenase idtM, found in Claviceps paspali (Rye ergot fungus).